The primary structure comprises 244 residues: Phosphoadenosine 5'-phosphosulfate reductase (244 aa).

Cys-239 serves as the catalytic Nucleophile; cysteine thiosulfonate intermediate.

The protein belongs to the PAPS reductase family. CysH subfamily.

The protein localises to the cytoplasm. It carries out the reaction [thioredoxin]-disulfide + sulfite + adenosine 3',5'-bisphosphate + 2 H(+) = [thioredoxin]-dithiol + 3'-phosphoadenylyl sulfate. It participates in sulfur metabolism; hydrogen sulfide biosynthesis; sulfite from sulfate: step 3/3. Its function is as follows. Catalyzes the formation of sulfite from phosphoadenosine 5'-phosphosulfate (PAPS) using thioredoxin as an electron donor. This Escherichia coli (strain K12 / MC4100 / BW2952) protein is Phosphoadenosine 5'-phosphosulfate reductase.